A 664-amino-acid polypeptide reads, in one-letter code: DNA ligase (664 aa).

NAD(+) contacts are provided by residues 32–36 (DKDYD) and 80–81 (SL). Lysine 122 acts as the N6-AMP-lysine intermediate in catalysis. Residues arginine 144, glutamate 178, and lysine 314 each contribute to the NAD(+) site. Residues cysteine 407, cysteine 410, cysteine 423, and cysteine 429 each contribute to the Zn(2+) site. The BRCT domain maps to 587–664 (IKENIFNGKT…SEEDFKNMIG (78 aa)).

It belongs to the NAD-dependent DNA ligase family. LigA subfamily. The cofactor is Mg(2+). It depends on Mn(2+) as a cofactor.

The enzyme catalyses NAD(+) + (deoxyribonucleotide)n-3'-hydroxyl + 5'-phospho-(deoxyribonucleotide)m = (deoxyribonucleotide)n+m + AMP + beta-nicotinamide D-nucleotide.. In terms of biological role, DNA ligase that catalyzes the formation of phosphodiester linkages between 5'-phosphoryl and 3'-hydroxyl groups in double-stranded DNA using NAD as a coenzyme and as the energy source for the reaction. It is essential for DNA replication and repair of damaged DNA. This chain is DNA ligase, found in Clostridium novyi (strain NT).